The chain runs to 449 residues: Na(+)/H(+) antiporter NhaA 2 (449 aa).

A run of 11 helical transmembrane segments spans residues 32–52 (IEAT…TLSN), 87–107 (GLMT…VVLG), 114–134 (MVAL…GLYL), 145–165 (GWGV…ALLG), 174–194 (VFLL…VAVG), 202–222 (TALA…LLGV), 233–253 (AIIW…GVIL), 318–338 (WVAF…PITI), 347–367 (LAVM…FAWL), 382–402 (WGGL…ALFI), and 417–437 (LGIL…LCAL).

The protein belongs to the NhaA Na(+)/H(+) (TC 2.A.33) antiporter family.

The protein resides in the cell inner membrane. The catalysed reaction is Na(+)(in) + 2 H(+)(out) = Na(+)(out) + 2 H(+)(in). Its function is as follows. Na(+)/H(+) antiporter that extrudes sodium in exchange for external protons. The polypeptide is Na(+)/H(+) antiporter NhaA 2 (Acidiphilium cryptum (strain JF-5)).